The following is a 327-amino-acid chain: tRNA U34 carboxymethyltransferase (327 aa).

Residues Lys91, Trp105, Lys110, Gly130, 181 to 182 (IE), Met196, Tyr200, and Arg315 contribute to the carboxy-S-adenosyl-L-methionine site.

This sequence belongs to the class I-like SAM-binding methyltransferase superfamily. CmoB family. As to quaternary structure, homotetramer.

The catalysed reaction is carboxy-S-adenosyl-L-methionine + 5-hydroxyuridine(34) in tRNA = 5-carboxymethoxyuridine(34) in tRNA + S-adenosyl-L-homocysteine + H(+). Catalyzes carboxymethyl transfer from carboxy-S-adenosyl-L-methionine (Cx-SAM) to 5-hydroxyuridine (ho5U) to form 5-carboxymethoxyuridine (cmo5U) at position 34 in tRNAs. In Pectobacterium atrosepticum (strain SCRI 1043 / ATCC BAA-672) (Erwinia carotovora subsp. atroseptica), this protein is tRNA U34 carboxymethyltransferase.